A 137-amino-acid polypeptide reads, in one-letter code: Nucleoside diphosphate kinase (137 aa).

Residues Lys-9, Phe-57, Arg-85, Thr-91, Arg-102, and Asn-112 each contribute to the ATP site. His-115 serves as the catalytic Pros-phosphohistidine intermediate.

The protein belongs to the NDK family. In terms of assembly, homotetramer. Requires Mg(2+) as cofactor.

It localises to the cytoplasm. The enzyme catalyses a 2'-deoxyribonucleoside 5'-diphosphate + ATP = a 2'-deoxyribonucleoside 5'-triphosphate + ADP. It catalyses the reaction a ribonucleoside 5'-diphosphate + ATP = a ribonucleoside 5'-triphosphate + ADP. Major role in the synthesis of nucleoside triphosphates other than ATP. The ATP gamma phosphate is transferred to the NDP beta phosphate via a ping-pong mechanism, using a phosphorylated active-site intermediate. In Wolinella succinogenes (strain ATCC 29543 / DSM 1740 / CCUG 13145 / JCM 31913 / LMG 7466 / NCTC 11488 / FDC 602W) (Vibrio succinogenes), this protein is Nucleoside diphosphate kinase.